The primary structure comprises 118 residues: Beta-2-microglobulin (118 aa).

The first 21 residues, 1 to 21 (MGSRWGIAVLGLFCFVSCLEA), serve as a signal peptide directing secretion. The region spanning 26-113 (PKIQVYSRHP…VHEGVKKTVK (88 aa)) is the Ig-like C1-type domain. C46 and C101 form a disulfide bridge.

It belongs to the beta-2-microglobulin family. Heterodimer of an alpha chain and a beta chain. Beta-2-microglobulin is the beta-chain of major histocompatibility complex class I molecules.

Its subcellular location is the secreted. Its function is as follows. Component of the class I major histocompatibility complex (MHC). Involved in the presentation of peptide antigens to the immune system. This is Beta-2-microglobulin (B2M) from Ornithorhynchus anatinus (Duckbill platypus).